A 516-amino-acid chain; its full sequence is Circadian clock oscillator protein KaiC (516 aa).

2 KaiC domains span residues 1 to 244 (MNQP…INIF) and 258 to 516 (ARIS…TLPE). ATP-binding residues include Gly-46, Thr-47, Gly-48, Lys-49, Thr-50, Leu-51, Ser-86, Lys-221, Leu-222, Arg-223, Thr-225, His-227, Thr-237, Thr-287, Gly-288, Thr-289, Gly-290, Lys-291, Thr-292, and Leu-293. A Mg(2+)-binding site is contributed by Thr-50. Residue Thr-292 coordinates Mg(2+). Glu-315 is a Mg(2+) binding site. Trp-328 lines the ATP pocket. Ser-428 is subject to Phosphoserine; by autocatalysis. Position 429 is a phosphothreonine; by autocatalysis (Thr-429). The ATP site is built by Arg-448, Lys-454, Met-455, Arg-456, Ser-458, His-460, and Lys-462.

The protein belongs to the KaiC family. In terms of assembly, homohexamer; hexamerization is dependent on ATP-binding. The KaiABC complex composition changes during the circadian cycle to control KaiC phosphorylation. Complexes KaiC(6), KaiA(2-4):KaiC(6), KaiB(6):KaiC(6) and KaiC(6):KaiB(6):KaiA(12) are among the most important forms, many form cooperatively. KaiC interacts with SasA, activating its autokinase function and leading to RpaA activation. Requires Mg(2+) as cofactor. Phosphorylated on serine and threonine residues by autocatalysis. Has a 4 step phosphorylation cycle; the autokinase acts first on Thr-429, then Ser-428. When Ser-428 is modified KaiC switches to an autophosphatase mode, acting first on phospho-Thr-429 then phospho-Ser-428.

It carries out the reaction L-seryl-[protein] + ATP = O-phospho-L-seryl-[protein] + ADP + H(+). The catalysed reaction is L-threonyl-[protein] + ATP = O-phospho-L-threonyl-[protein] + ADP + H(+). It catalyses the reaction ATP + H2O = ADP + phosphate + H(+). Its activity is regulated as follows. The interaction with KaiA enhances its phosphorylation status, while the interaction with KaiB decreases it. Central component of the KaiABC oscillator complex, which constitutes the main circadian regulator in cyanobacteria. Complex composition changes during the circadian cycle to control KaiC phosphorylation. KaiA stimulates KaiC autophosphorylation, while KaiB sequesters KaiA, leading to KaiC autodephosphorylation. Clock output pathways impact the RpaA transcriptional regulator. KaiC enhances the autophosphorylation activity of SasA, which then transfers its phosphate group to RpaA to activate it. KaiB and KaiC together enhance the phospho-RpaA dephosphatase activity of CikA. Its function is as follows. Has a weak, temperature-independent ATPase activity; ATPase activity defines the circadian period. The phosphorylation state of KaiC modulates its ATPase activity and effects KaiB binding. This chain is Circadian clock oscillator protein KaiC, found in Picosynechococcus sp. (strain ATCC 27264 / PCC 7002 / PR-6) (Agmenellum quadruplicatum).